We begin with the raw amino-acid sequence, 508 residues long: Photosystem II CP47 reaction center protein (508 aa).

6 consecutive transmembrane segments (helical) span residues Ser21–Ser36, Ile101–Trp115, Gly140–Phe156, Ile203–Ser218, Val237–Val252, and Ser457–Arg472.

Belongs to the PsbB/PsbC family. PsbB subfamily. PSII is composed of 1 copy each of membrane proteins PsbA, PsbB, PsbC, PsbD, PsbE, PsbF, PsbH, PsbI, PsbJ, PsbK, PsbL, PsbM, PsbT, PsbX, PsbY, PsbZ, Psb30/Ycf12, at least 3 peripheral proteins of the oxygen-evolving complex and a large number of cofactors. It forms dimeric complexes. Requires Binds multiple chlorophylls. PSII binds additional chlorophylls, carotenoids and specific lipids. as cofactor.

It localises to the plastid. It is found in the chloroplast thylakoid membrane. In terms of biological role, one of the components of the core complex of photosystem II (PSII). It binds chlorophyll and helps catalyze the primary light-induced photochemical processes of PSII. PSII is a light-driven water:plastoquinone oxidoreductase, using light energy to abstract electrons from H(2)O, generating O(2) and a proton gradient subsequently used for ATP formation. This is Photosystem II CP47 reaction center protein from Manihot esculenta (Cassava).